We begin with the raw amino-acid sequence, 366 residues long: NADH-quinone oxidoreductase subunit D (366 aa).

This sequence belongs to the complex I 49 kDa subunit family. In terms of assembly, NDH-1 is composed of 14 different subunits. Subunits NuoB, C, D, E, F, and G constitute the peripheral sector of the complex.

The protein localises to the cell membrane. It catalyses the reaction a quinone + NADH + 5 H(+)(in) = a quinol + NAD(+) + 4 H(+)(out). Its function is as follows. NDH-1 shuttles electrons from NADH, via FMN and iron-sulfur (Fe-S) centers, to quinones in the respiratory chain. The immediate electron acceptor for the enzyme in this species is believed to be a menaquinone. Couples the redox reaction to proton translocation (for every two electrons transferred, four hydrogen ions are translocated across the cytoplasmic membrane), and thus conserves the redox energy in a proton gradient. The sequence is that of NADH-quinone oxidoreductase subunit D from Bacillus cytotoxicus (strain DSM 22905 / CIP 110041 / 391-98 / NVH 391-98).